We begin with the raw amino-acid sequence, 699 residues long: Elongation factor G (699 aa).

The tr-type G domain maps to 8–288 (EDYRNFGIMA…AVVDYLPSPM (281 aa)). GTP-binding positions include 17–24 (AHIDAGKT), 86–90 (DTPGH), and 140–143 (NKMD).

It belongs to the TRAFAC class translation factor GTPase superfamily. Classic translation factor GTPase family. EF-G/EF-2 subfamily.

Its subcellular location is the cytoplasm. Its function is as follows. Catalyzes the GTP-dependent ribosomal translocation step during translation elongation. During this step, the ribosome changes from the pre-translocational (PRE) to the post-translocational (POST) state as the newly formed A-site-bound peptidyl-tRNA and P-site-bound deacylated tRNA move to the P and E sites, respectively. Catalyzes the coordinated movement of the two tRNA molecules, the mRNA and conformational changes in the ribosome. This Rhizobium johnstonii (strain DSM 114642 / LMG 32736 / 3841) (Rhizobium leguminosarum bv. viciae) protein is Elongation factor G.